A 299-amino-acid chain; its full sequence is Protoheme IX farnesyltransferase (299 aa).

Transmembrane regions (helical) follow at residues 17–37, 41–61, 91–111, 113–133, 141–161, 168–188, 207–227, 228–248, and 266–286; these read VVAL…PAPY, GLLV…AAVF, ALMW…LFVN, ITMV…TLYL, IVIG…AVSG, ACLL…ALAI, GLAY…LVSL, LPYL…ALGI, and IAWC…VTLL.

The protein belongs to the UbiA prenyltransferase family. Protoheme IX farnesyltransferase subfamily.

Its subcellular location is the cell inner membrane. The enzyme catalyses heme b + (2E,6E)-farnesyl diphosphate + H2O = Fe(II)-heme o + diphosphate. The protein operates within porphyrin-containing compound metabolism; heme O biosynthesis; heme O from protoheme: step 1/1. Functionally, converts heme B (protoheme IX) to heme O by substitution of the vinyl group on carbon 2 of heme B porphyrin ring with a hydroxyethyl farnesyl side group. The chain is Protoheme IX farnesyltransferase from Ruthia magnifica subsp. Calyptogena magnifica.